Consider the following 409-residue polypeptide: Tryptophan synthase beta chain (409 aa).

Lys-100 bears the N6-(pyridoxal phosphate)lysine mark.

Belongs to the TrpB family. As to quaternary structure, tetramer of two alpha and two beta chains. It depends on pyridoxal 5'-phosphate as a cofactor.

It catalyses the reaction (1S,2R)-1-C-(indol-3-yl)glycerol 3-phosphate + L-serine = D-glyceraldehyde 3-phosphate + L-tryptophan + H2O. The protein operates within amino-acid biosynthesis; L-tryptophan biosynthesis; L-tryptophan from chorismate: step 5/5. In terms of biological role, the beta subunit is responsible for the synthesis of L-tryptophan from indole and L-serine. The chain is Tryptophan synthase beta chain from Pyrobaculum arsenaticum (strain DSM 13514 / JCM 11321 / PZ6).